A 225-amino-acid chain; its full sequence is Chromosome partition protein MukE (225 aa).

The tract at residues 197-225 (RDGEAMPIENHLQLNDETEESQPDSGEEE) is disordered. The span at 212 to 225 (DETEESQPDSGEEE) shows a compositional bias: acidic residues.

This sequence belongs to the MukE family. In terms of assembly, interacts, and probably forms a ternary complex, with MukF and MukB. The complex formation is stimulated by calcium or magnesium.

Its subcellular location is the cytoplasm. The protein localises to the nucleoid. Functionally, involved in chromosome condensation, segregation and cell cycle progression. May participate in facilitating chromosome segregation by condensation DNA from both sides of a centrally located replisome during cell division. Probably acts via its interaction with MukB and MukF. The chain is Chromosome partition protein MukE from Salmonella typhi.